Consider the following 87-residue polypeptide: Large ribosomal subunit protein eL31 (87 aa).

The protein belongs to the eukaryotic ribosomal protein eL31 family.

The protein is Large ribosomal subunit protein eL31 of Methanocorpusculum labreanum (strain ATCC 43576 / DSM 4855 / Z).